Reading from the N-terminus, the 224-residue chain is Uracil-DNA glycosylase (224 aa).

Residue Asp64 is the Proton acceptor of the active site.

Belongs to the uracil-DNA glycosylase (UDG) superfamily. UNG family.

The protein resides in the cytoplasm. It catalyses the reaction Hydrolyzes single-stranded DNA or mismatched double-stranded DNA and polynucleotides, releasing free uracil.. Functionally, excises uracil residues from the DNA which can arise as a result of misincorporation of dUMP residues by DNA polymerase or due to deamination of cytosine. The polypeptide is Uracil-DNA glycosylase (Geobacillus sp. (strain WCH70)).